Here is a 270-residue protein sequence, read N- to C-terminus: 4-hydroxy-tetrahydrodipicolinate reductase (270 aa).

Residues 9–14 and Glu-35 each bind NAD(+); that span reads GAGGRM. Residue Arg-36 participates in NADP(+) binding. Residues 99–101 and 123–126 each bind NAD(+); these read GTT and ASNY. His-156 acts as the Proton donor/acceptor in catalysis. His-157 lines the (S)-2,3,4,5-tetrahydrodipicolinate pocket. The Proton donor role is filled by Lys-160. 166–167 contributes to the (S)-2,3,4,5-tetrahydrodipicolinate binding site; it reads GT.

This sequence belongs to the DapB family.

The protein localises to the cytoplasm. It catalyses the reaction (S)-2,3,4,5-tetrahydrodipicolinate + NAD(+) + H2O = (2S,4S)-4-hydroxy-2,3,4,5-tetrahydrodipicolinate + NADH + H(+). The enzyme catalyses (S)-2,3,4,5-tetrahydrodipicolinate + NADP(+) + H2O = (2S,4S)-4-hydroxy-2,3,4,5-tetrahydrodipicolinate + NADPH + H(+). The protein operates within amino-acid biosynthesis; L-lysine biosynthesis via DAP pathway; (S)-tetrahydrodipicolinate from L-aspartate: step 4/4. Catalyzes the conversion of 4-hydroxy-tetrahydrodipicolinate (HTPA) to tetrahydrodipicolinate. The chain is 4-hydroxy-tetrahydrodipicolinate reductase from Actinobacillus succinogenes (strain ATCC 55618 / DSM 22257 / CCUG 43843 / 130Z).